The chain runs to 338 residues: Nicotinate-nucleotide--dimethylbenzimidazole phosphoribosyltransferase (338 aa).

Glu305 acts as the Proton acceptor in catalysis.

It belongs to the CobT family.

The enzyme catalyses 5,6-dimethylbenzimidazole + nicotinate beta-D-ribonucleotide = alpha-ribazole 5'-phosphate + nicotinate + H(+). It functions in the pathway nucleoside biosynthesis; alpha-ribazole biosynthesis; alpha-ribazole from 5,6-dimethylbenzimidazole: step 1/2. Catalyzes the synthesis of alpha-ribazole-5'-phosphate from nicotinate mononucleotide (NAMN) and 5,6-dimethylbenzimidazole (DMB). This Rhizobium meliloti (strain 1021) (Ensifer meliloti) protein is Nicotinate-nucleotide--dimethylbenzimidazole phosphoribosyltransferase.